Consider the following 322-residue polypeptide: 4-diphosphocytidyl-2-C-methyl-D-erythritol kinase (322 aa).

Residue Lys-27 is part of the active site. Residue Pro-112 to Ala-122 coordinates ATP. Asp-154 is a catalytic residue.

Belongs to the GHMP kinase family. IspE subfamily.

The enzyme catalyses 4-CDP-2-C-methyl-D-erythritol + ATP = 4-CDP-2-C-methyl-D-erythritol 2-phosphate + ADP + H(+). It participates in isoprenoid biosynthesis; isopentenyl diphosphate biosynthesis via DXP pathway; isopentenyl diphosphate from 1-deoxy-D-xylulose 5-phosphate: step 3/6. Functionally, catalyzes the phosphorylation of the position 2 hydroxy group of 4-diphosphocytidyl-2C-methyl-D-erythritol. This chain is 4-diphosphocytidyl-2-C-methyl-D-erythritol kinase, found in Mycolicibacterium smegmatis (strain ATCC 700084 / mc(2)155) (Mycobacterium smegmatis).